Consider the following 556-residue polypeptide: Formate--tetrahydrofolate ligase (556 aa).

65–72 (TPAGEGKS) contacts ATP.

This sequence belongs to the formate--tetrahydrofolate ligase family.

The enzyme catalyses (6S)-5,6,7,8-tetrahydrofolate + formate + ATP = (6R)-10-formyltetrahydrofolate + ADP + phosphate. Its pathway is one-carbon metabolism; tetrahydrofolate interconversion. In Streptococcus suis (strain 98HAH33), this protein is Formate--tetrahydrofolate ligase.